Consider the following 95-residue polypeptide: Large ribosomal subunit protein uL23 (95 aa).

This sequence belongs to the universal ribosomal protein uL23 family. In terms of assembly, part of the 50S ribosomal subunit. Contacts protein L29, and trigger factor when it is bound to the ribosome.

Functionally, one of the early assembly proteins it binds 23S rRNA. One of the proteins that surrounds the polypeptide exit tunnel on the outside of the ribosome. Forms the main docking site for trigger factor binding to the ribosome. The chain is Large ribosomal subunit protein uL23 from Shouchella clausii (strain KSM-K16) (Alkalihalobacillus clausii).